A 679-amino-acid polypeptide reads, in one-letter code: Protein hook (679 aa).

The interaction with microtubules stretch occupies residues 1–155 (MSAPKNEMYY…NIMRALQELE (155 aa)). Residues 6-123 (NEMYYSLLEW…RLLQLVLGCA (118 aa)) enclose the Calponin-homology (CH) domain. 2 coiled-coil regions span residues 135-437 (EIMC…LKCG) and 480-574 (QTAL…QEIL).

This sequence belongs to the hook family. As to quaternary structure, homodimer. Interacts with microtubules via its N-terminus.

It localises to the cytoplasm. Its subcellular location is the cytoskeleton. The protein resides in the endosome. It is found in the synapse. Its function is as follows. Involved in endocytic trafficking by stabilizing organelles of the endocytic pathway. Probably acts as a cytoskeletal linker protein required to tether endosome vesicles to the cytoskeleton. Involved in modulation of endocytosis at stages required for down-regulation of membrane proteins that control synapse size. Not involved in synaptic vesicle recycling. Required in R7 cells for boss endocytosis into multivesicular bodies (MVBs). Has a role in regulating adult longevity. This Drosophila melanogaster (Fruit fly) protein is Protein hook.